We begin with the raw amino-acid sequence, 121 residues long: Putative ferredoxin (121 aa).

The protein to E.coli YkgJ.

In Acinetobacter calcoaceticus, this protein is Putative ferredoxin.